Reading from the N-terminus, the 607-residue chain is Chaperone protein DnaK (607 aa).

Thr-173 is subject to Phosphothreonine; by autocatalysis. Residues 577–588 show a composition bias toward low complexity; sequence AQAQQGAEGAAS. Residues 577 to 607 are disordered; that stretch reads AQAQQGAEGAASQDDDVVDADFTEVKDDDNK. Residues 589 to 598 are compositionally biased toward acidic residues; it reads QDDDVVDADF.

Belongs to the heat shock protein 70 family.

Functionally, acts as a chaperone. This is Chaperone protein DnaK from Macrococcus caseolyticus (strain JCSC5402) (Macrococcoides caseolyticum).